The chain runs to 430 residues: Purine nucleoside phosphorylase LACC1 (430 aa).

An N6-acetyllysine modification is found at lysine 247. Residues histidine 250, cysteine 284, and histidine 301 each coordinate Zn(2+).

Belongs to the purine nucleoside phosphorylase YfiH/LACC1 family. Interacts with FASN. Interacts with SDHA. Interacts with ATF6, EIF2AK3 and ERN1. In terms of processing, phosphorylated on tyrosine residues. Ubiquitously expressed, with higher expression levels in immune-related tissues such as lymph nodes and spleen. Expressed in both intestinal and peripheral myeloid-derived cells.

Its subcellular location is the cytoplasm. The protein localises to the nucleus. It is found in the endoplasmic reticulum. The protein resides in the peroxisome. It catalyses the reaction adenosine + phosphate = alpha-D-ribose 1-phosphate + adenine. The catalysed reaction is inosine + phosphate = alpha-D-ribose 1-phosphate + hypoxanthine. The enzyme catalyses guanosine + phosphate = alpha-D-ribose 1-phosphate + guanine. It carries out the reaction S-methyl-5'-thioadenosine + phosphate = 5-(methylsulfanyl)-alpha-D-ribose 1-phosphate + adenine. It catalyses the reaction adenosine + H2O + H(+) = inosine + NH4(+). Functionally, purine nucleoside enzyme that catalyzes the phosphorolysis of adenosine, guanosine and inosine nucleosides, yielding D-ribose 1-phosphate and the respective free bases, adenine, guanine and hypoxanthine. Also catalyzes the phosphorolysis of S-methyl-5'-thioadenosine into adenine and S-methyl-5-thio-alpha-D-ribose 1-phosphate. Also has adenosine deaminase activity. Acts as a regulator of innate immunity in macrophages by modulating the purine nucleotide metabolism, thereby regulating the metabolic function and bioenergetic state of macrophages. Enables a purine nucleotide cycle between adenosine and inosine monophosphate and adenylosuccinate that prevents cytoplasmic acidification and balances the cytoplasmic-mitochondrial redox interface. The purine nucleotide cycle consumes aspartate and releases fumarate in a manner involving fatty acid oxidation and ATP-citrate lyase activity. Participates in pattern recognition receptor (PRR)-induced cytokines in macrophages: associates with the NOD2-signaling complex and promotes optimal NOD2-induced signaling, cytokine secretion and bacterial clearance. Localizes to the endoplasmic reticulum upon PRR stimulation of macrophages and associates with endoplasmic reticulum-stress sensors, promoting the endoplasmic reticulum unfolded protein response (UPR). Does not show laccase activity. This chain is Purine nucleoside phosphorylase LACC1, found in Homo sapiens (Human).